We begin with the raw amino-acid sequence, 553 residues long: Thermosome subunit beta (553 aa).

Residues Lys-534–Asp-553 form a disordered region.

The protein belongs to the TCP-1 chaperonin family. In terms of assembly, forms a Heterooligomeric complex of two stacked eight-membered rings.

Functionally, molecular chaperone; binds unfolded polypeptides in vitro, and has a weak ATPase activity. In Sulfolobus acidocaldarius (strain ATCC 33909 / DSM 639 / JCM 8929 / NBRC 15157 / NCIMB 11770), this protein is Thermosome subunit beta (thsB).